The chain runs to 80 residues: UPF0291 protein LCA_1274 (80 aa).

The segment at 59-80 is disordered; sequence EGKEVTPEKVKDIQREKGLRDD.

It belongs to the UPF0291 family.

Its subcellular location is the cytoplasm. In Latilactobacillus sakei subsp. sakei (strain 23K) (Lactobacillus sakei subsp. sakei), this protein is UPF0291 protein LCA_1274.